The primary structure comprises 263 residues: Urease accessory protein UreD 1 (263 aa).

Belongs to the UreD family. As to quaternary structure, ureD, UreF and UreG form a complex that acts as a GTP-hydrolysis-dependent molecular chaperone, activating the urease apoprotein by helping to assemble the nickel containing metallocenter of UreC. The UreE protein probably delivers the nickel.

The protein localises to the cytoplasm. Its function is as follows. Required for maturation of urease via the functional incorporation of the urease nickel metallocenter. This Synechococcus sp. (strain JA-3-3Ab) (Cyanobacteria bacterium Yellowstone A-Prime) protein is Urease accessory protein UreD 1.